A 259-amino-acid chain; its full sequence is 5'-nucleotidase SurE (259 aa).

Asp8, Asp9, Ser39, and Asn98 together coordinate a divalent metal cation.

This sequence belongs to the SurE nucleotidase family. It depends on a divalent metal cation as a cofactor.

It is found in the cytoplasm. It catalyses the reaction a ribonucleoside 5'-phosphate + H2O = a ribonucleoside + phosphate. In terms of biological role, nucleotidase that shows phosphatase activity on nucleoside 5'-monophosphates. This chain is 5'-nucleotidase SurE, found in Fervidobacterium nodosum (strain ATCC 35602 / DSM 5306 / Rt17-B1).